The primary structure comprises 256 residues: Hemolymph lipopolysaccharide-binding protein (256 aa).

Residues 1–21 (MMNTRALLPLSVLLMATLCLC) form the signal peptide. Positions 22 to 33 (ELPIPILQRFVR) are excised as a propeptide. A glycan (N-linked (GlcNAc...) asparagine) is linked at N56. One can recognise a C-type lectin domain in the interval 146–256 (IICQQEGGHL…KLPFVCEVEL (111 aa)). 2 disulfides stabilise this stretch: C148/C252 and C230/C244.

In terms of tissue distribution, hemolymph.

It localises to the secreted. Participates probably in the elimination of foreign substances invading the insect abdominal cavity, and in trapping intracellular symbionts, when they leak from the mycetomes into the hemolymph. The sequence is that of Hemolymph lipopolysaccharide-binding protein from Periplaneta americana (American cockroach).